A 488-amino-acid chain; its full sequence is Glutamyl-tRNA(Gln) amidotransferase subunit A (488 aa).

Residues K77 and S152 each act as charge relay system in the active site. The active-site Acyl-ester intermediate is the S176.

Belongs to the amidase family. GatA subfamily. In terms of assembly, heterotrimer of A, B and C subunits.

The catalysed reaction is L-glutamyl-tRNA(Gln) + L-glutamine + ATP + H2O = L-glutaminyl-tRNA(Gln) + L-glutamate + ADP + phosphate + H(+). Functionally, allows the formation of correctly charged Gln-tRNA(Gln) through the transamidation of misacylated Glu-tRNA(Gln) in organisms which lack glutaminyl-tRNA synthetase. The reaction takes place in the presence of glutamine and ATP through an activated gamma-phospho-Glu-tRNA(Gln). This Streptococcus pyogenes serotype M1 protein is Glutamyl-tRNA(Gln) amidotransferase subunit A.